A 119-amino-acid polypeptide reads, in one-letter code: Holo-[acyl-carrier-protein] synthase (119 aa).

Mg(2+) is bound by residues Asp8 and Glu58.

It belongs to the P-Pant transferase superfamily. AcpS family. Mg(2+) is required as a cofactor.

Its subcellular location is the cytoplasm. It catalyses the reaction apo-[ACP] + CoA = holo-[ACP] + adenosine 3',5'-bisphosphate + H(+). In terms of biological role, transfers the 4'-phosphopantetheine moiety from coenzyme A to a Ser of acyl-carrier-protein. This chain is Holo-[acyl-carrier-protein] synthase, found in Bacillus cereus (strain ZK / E33L).